The following is a 419-amino-acid chain: eIF5-mimic protein 2 (419 aa).

M1 carries the N-acetylmethionine modification. A compositionally biased stretch (polar residues) spans 1-15; it reads MNNQKQQKPTLSGQR. A disordered region spans residues 1-26; sequence MNNQKQQKPTLSGQRFKTRKRDEKER. Phosphoserine is present on S12. The region spanning 247–414 is the W2 domain; it reads NQQTIGARKE…KNAEEESESE (168 aa). A Glycyl lysine isopeptide (Lys-Gly) (interchain with G-Cter in SUMO2) cross-link involves residue K368. 2 positions are modified to phosphoserine: S411 and S413.

This sequence belongs to the BZW family.

Functionally, translation initiation regulator which represses repeat-associated non-AUG (RAN) initiated translation probably by acting as a competitive inhibitor of eukaryotic translation initiation factor 5 (EIF5) function. Enhances histone H4 gene transcription but does not seem to bind DNA directly. The sequence is that of eIF5-mimic protein 2 (BZW1) from Pongo abelii (Sumatran orangutan).